The chain runs to 144 residues: MPGVSVRDVAAQDFINAYASFLQRQGKLEVPGYVDIVKTSSGNEMPPQDAEGWFYKRAASVARHIYMRKQVGVGKLNKLYGGAKSRGVRPYKHIDASGSINRKVLQALEKIGIVEISPKGGRRISENGQRDLDRIAAQTLEEDE.

This sequence belongs to the eukaryotic ribosomal protein eS19 family. As to quaternary structure, component of the small ribosomal subunit (SSU). Mature yeast ribosomes consist of a small (40S) and a large (60S) subunit. The 40S small subunit contains 1 molecule of ribosomal RNA (18S rRNA) and 33 different proteins (encoded by 57 genes). The large 60S subunit contains 3 rRNA molecules (25S, 5.8S and 5S rRNA) and 46 different proteins (encoded by 81 genes).

Its subcellular location is the cytoplasm. In terms of biological role, component of the ribosome, a large ribonucleoprotein complex responsible for the synthesis of proteins in the cell. The small ribosomal subunit (SSU) binds messenger RNAs (mRNAs) and translates the encoded message by selecting cognate aminoacyl-transfer RNA (tRNA) molecules. The large subunit (LSU) contains the ribosomal catalytic site termed the peptidyl transferase center (PTC), which catalyzes the formation of peptide bonds, thereby polymerizing the amino acids delivered by tRNAs into a polypeptide chain. The nascent polypeptides leave the ribosome through a tunnel in the LSU and interact with protein factors that function in enzymatic processing, targeting, and the membrane insertion of nascent chains at the exit of the ribosomal tunnel. eS19 is required for proper maturation of the small (40S) ribosomal subunit. Binds to 40S pre-ribosomal particles, probably required after association of NOC4 but before association of ENP1, TSR1 and RIO2 with 20/21S pre-rRNA. This Saccharomyces cerevisiae (strain ATCC 204508 / S288c) (Baker's yeast) protein is Small ribosomal subunit protein eS19A.